Here is a 195-residue protein sequence, read N- to C-terminus: Thymidine kinase (195 aa).

Residues 9–16 (ATMNAGKS) and 89–92 (DEAQ) contribute to the ATP site. Residue glutamate 90 is the Proton acceptor of the active site. Zn(2+)-binding residues include cysteine 147, cysteine 149, cysteine 184, and histidine 187.

Belongs to the thymidine kinase family. In terms of assembly, homotetramer.

It is found in the cytoplasm. It catalyses the reaction thymidine + ATP = dTMP + ADP + H(+). The sequence is that of Thymidine kinase from Rhizobium meliloti (strain 1021) (Ensifer meliloti).